The sequence spans 111 residues: Nucleoid-associated protein PSEEN1789 (111 aa).

Disordered regions lie at residues Met1–Glu25 and Asn89–Phe111.

This sequence belongs to the YbaB/EbfC family. Homodimer.

The protein resides in the cytoplasm. It localises to the nucleoid. Its function is as follows. Binds to DNA and alters its conformation. May be involved in regulation of gene expression, nucleoid organization and DNA protection. The sequence is that of Nucleoid-associated protein PSEEN1789 from Pseudomonas entomophila (strain L48).